The primary structure comprises 224 residues: Orotate phosphoribosyltransferase (224 aa).

5-phospho-alpha-D-ribose 1-diphosphate-binding positions include lysine 26, 73–74 (YK), arginine 100, lysine 101, lysine 104, histidine 106, and 127–135 (EDVTTSGKS). Residues threonine 131 and arginine 160 each coordinate orotate.

It belongs to the purine/pyrimidine phosphoribosyltransferase family. PyrE subfamily. In terms of assembly, homodimer. Mg(2+) serves as cofactor.

It catalyses the reaction orotidine 5'-phosphate + diphosphate = orotate + 5-phospho-alpha-D-ribose 1-diphosphate. It participates in pyrimidine metabolism; UMP biosynthesis via de novo pathway; UMP from orotate: step 1/2. Catalyzes the transfer of a ribosyl phosphate group from 5-phosphoribose 1-diphosphate to orotate, leading to the formation of orotidine monophosphate (OMP). This chain is Orotate phosphoribosyltransferase, found in Clostridium botulinum (strain Eklund 17B / Type B).